The sequence spans 558 residues: Potassium-transporting ATPase potassium-binding subunit (558 aa).

12 consecutive transmembrane segments (helical) span residues 2-22 (LQGFVQIALILAILVATAPLL), 66-86 (VSAALISNLVMGVFVFLILMF), 135-155 (ALGFLMFTSAATGIAVAIAFI), 177-197 (ILLPISLVGAILLLVAGVPET), 253-273 (LLETVIMMVIPAGLIITYGIM), 280-300 (GWLIFWMVFILYGILIAIAAV), 327-347 (FGWVLTALWAVSTTGTMCGAV), 354-374 (LMPPGGFVTLSDLFLQIIWGG), 378-398 (GTAYLFVFLILTVFLTGLMVG), 413-433 (IVLASLILLIHPIAILIPTAI), 482-502 (LSASFSLIAGRYVPIVALIFL), and 528-548 (GITAGAIIILGALTFLPILVL).

Belongs to the KdpA family. As to quaternary structure, the system is composed of three essential subunits: KdpA, KdpB and KdpC.

It is found in the cell inner membrane. Part of the high-affinity ATP-driven potassium transport (or Kdp) system, which catalyzes the hydrolysis of ATP coupled with the electrogenic transport of potassium into the cytoplasm. This subunit binds the periplasmic potassium ions and delivers the ions to the membrane domain of KdpB through an intramembrane tunnel. The chain is Potassium-transporting ATPase potassium-binding subunit from Synechocystis sp. (strain ATCC 27184 / PCC 6803 / Kazusa).